The chain runs to 219 residues: Octanoyltransferase (219 aa).

In terms of domain architecture, BPL/LPL catalytic spans 31-219; that stretch reads EDLPGFLVFC…KLKRRLLEVL (189 aa). Substrate-binding positions include 69–76, 153–155, and 166–168; these read RGGRATYH, SVG, and GAA. Cys-184 (acyl-thioester intermediate) is an active-site residue.

It belongs to the LipB family.

The protein localises to the cytoplasm. The catalysed reaction is octanoyl-[ACP] + L-lysyl-[protein] = N(6)-octanoyl-L-lysyl-[protein] + holo-[ACP] + H(+). It participates in protein modification; protein lipoylation via endogenous pathway; protein N(6)-(lipoyl)lysine from octanoyl-[acyl-carrier-protein]: step 1/2. Its function is as follows. Catalyzes the transfer of endogenously produced octanoic acid from octanoyl-acyl-carrier-protein onto the lipoyl domains of lipoate-dependent enzymes. Lipoyl-ACP can also act as a substrate although octanoyl-ACP is likely to be the physiological substrate. This chain is Octanoyltransferase, found in Bdellovibrio bacteriovorus (strain ATCC 15356 / DSM 50701 / NCIMB 9529 / HD100).